A 325-amino-acid polypeptide reads, in one-letter code: Biotin synthase (325 aa).

In terms of domain architecture, Radical SAM core spans 43 to 262 (CSVETAQLLS…VAVARLLMPR (220 aa)). Positions 58, 62, and 65 each coordinate [4Fe-4S] cluster. Positions 102, 133, 193, and 266 each coordinate [2Fe-2S] cluster.

Belongs to the radical SAM superfamily. Biotin synthase family. As to quaternary structure, homodimer. The cofactor is [4Fe-4S] cluster. It depends on [2Fe-2S] cluster as a cofactor.

The enzyme catalyses (4R,5S)-dethiobiotin + (sulfur carrier)-SH + 2 reduced [2Fe-2S]-[ferredoxin] + 2 S-adenosyl-L-methionine = (sulfur carrier)-H + biotin + 2 5'-deoxyadenosine + 2 L-methionine + 2 oxidized [2Fe-2S]-[ferredoxin]. It participates in cofactor biosynthesis; biotin biosynthesis; biotin from 7,8-diaminononanoate: step 2/2. Functionally, catalyzes the conversion of dethiobiotin (DTB) to biotin by the insertion of a sulfur atom into dethiobiotin via a radical-based mechanism. The polypeptide is Biotin synthase (Azorhizobium caulinodans (strain ATCC 43989 / DSM 5975 / JCM 20966 / LMG 6465 / NBRC 14845 / NCIMB 13405 / ORS 571)).